Here is a 349-residue protein sequence, read N- to C-terminus: Draxin (349 aa).

The signal sequence occupies residues methionine 1–alanine 25. A compositionally biased stretch (polar residues) spans asparagine 40–arginine 53. 3 disordered regions span residues asparagine 40 to alanine 63, proline 119 to lysine 166, and tryptophan 246 to proline 273. The segment covering serine 54 to alanine 63 has biased composition (basic residues). Basic and acidic residues predominate over residues proline 119–glutamate 139. 2 stretches are compositionally biased toward basic residues: residues glutamine 140–lysine 155 and alanine 249–lysine 258. Asparagine 264 carries an N-linked (GlcNAc...) asparagine glycan.

Belongs to the draxin family.

It localises to the secreted. Functionally, chemorepulsive axon guidance protein required for the development of spinal cord and forebrain commissures. Acts as a chemorepulsive guidance protein for commissural axons during development. Able to inhibit or repel neurite outgrowth from dorsal spinal cord and cortical explants in vitro. Binds directly to the neurites and growth cones. This chain is Draxin, found in Gallus gallus (Chicken).